Here is a 154-residue protein sequence, read N- to C-terminus: Calmodulin-like protein 4 (154 aa).

EF-hand domains follow at residues 7–42, 43–78, 80–115, and 116–151; these read EQMV…LGLE, PTDQ…KMKD, DGDE…LGEK, and MTDE…AERK. D20, N22, D24, C26, E31, D56, D58, N60, E67, D93, D95, N97, and E104 together coordinate Ca(2+). Position 115 is an N6,N6,N6-trimethyllysine (K115). Residues D129, D131, D133, Q135, and E140 each coordinate Ca(2+).

Belongs to the calmodulin family.

In terms of biological role, potential calcium sensor. This is Calmodulin-like protein 4 (CML4) from Oryza sativa subsp. japonica (Rice).